Reading from the N-terminus, the 560-residue chain is DNA ligase B (560 aa).

Lysine 124 serves as the catalytic N6-AMP-lysine intermediate.

It belongs to the NAD-dependent DNA ligase family. LigB subfamily.

The catalysed reaction is NAD(+) + (deoxyribonucleotide)n-3'-hydroxyl + 5'-phospho-(deoxyribonucleotide)m = (deoxyribonucleotide)n+m + AMP + beta-nicotinamide D-nucleotide.. In terms of biological role, catalyzes the formation of phosphodiester linkages between 5'-phosphoryl and 3'-hydroxyl groups in double-stranded DNA using NAD as a coenzyme and as the energy source for the reaction. The sequence is that of DNA ligase B from Escherichia coli O9:H4 (strain HS).